The primary structure comprises 51 residues: Large ribosomal subunit protein bL33 (51 aa).

This sequence belongs to the bacterial ribosomal protein bL33 family.

The chain is Large ribosomal subunit protein bL33 from Psychrobacter sp. (strain PRwf-1).